The primary structure comprises 434 residues: D-amino acid dehydrogenase (434 aa).

Position 3-17 (valine 3–tryptophan 17) interacts with FAD.

This sequence belongs to the DadA oxidoreductase family. FAD is required as a cofactor.

It carries out the reaction a D-alpha-amino acid + A + H2O = a 2-oxocarboxylate + AH2 + NH4(+). It participates in amino-acid degradation; D-alanine degradation; NH(3) and pyruvate from D-alanine: step 1/1. In terms of biological role, oxidative deamination of D-amino acids. This is D-amino acid dehydrogenase from Yersinia pseudotuberculosis serotype O:3 (strain YPIII).